Reading from the N-terminus, the 203-residue chain is Endo-type membrane-bound lytic murein transglycosylase A (203 aa).

An N-terminal signal peptide occupies residues 1–15 (MKLRWFAFLVVLLAG). Cys16 is lipidated: N-palmitoyl cysteine. The S-diacylglycerol cysteine moiety is linked to residue Cys16.

This sequence belongs to the transglycosylase Slt family.

It is found in the cell outer membrane. It carries out the reaction Endolytic cleavage of the (1-&gt;4)-beta-glycosidic linkage between N-acetylmuramic acid (MurNAc) and N-acetylglucosamine (GlcNAc) residues in peptidoglycan with concomitant formation of a 1,6-anhydrobond in the MurNAc residue.. Murein-degrading enzyme. May play a role in recycling of muropeptides during cell elongation and/or cell division. Preferentially cleaves at a distance of more than two disaccharide units from the ends of the glycan chain. The protein is Endo-type membrane-bound lytic murein transglycosylase A of Escherichia fergusonii (strain ATCC 35469 / DSM 13698 / CCUG 18766 / IAM 14443 / JCM 21226 / LMG 7866 / NBRC 102419 / NCTC 12128 / CDC 0568-73).